The primary structure comprises 306 residues: Homoserine O-acetyltransferase (306 aa).

The Acyl-thioester intermediate role is filled by cysteine 142. 2 residues coordinate substrate: lysine 163 and serine 192. Histidine 235 (proton acceptor) is an active-site residue. Glutamate 237 is a catalytic residue. Arginine 249 contacts substrate.

The protein belongs to the MetA family.

Its subcellular location is the cytoplasm. The catalysed reaction is L-homoserine + acetyl-CoA = O-acetyl-L-homoserine + CoA. It participates in amino-acid biosynthesis; L-methionine biosynthesis via de novo pathway; O-acetyl-L-homoserine from L-homoserine: step 1/1. Functionally, transfers an acetyl group from acetyl-CoA to L-homoserine, forming acetyl-L-homoserine. The protein is Homoserine O-acetyltransferase of Clostridium botulinum (strain Eklund 17B / Type B).